The following is a 637-amino-acid chain: 1-deoxy-D-xylulose-5-phosphate synthase (637 aa).

Residues H76 and 117–119 (AHS) contribute to the thiamine diphosphate site. D148 serves as a coordination point for Mg(2+). Residues 149–150 (GA), N177, Y287, and E369 contribute to the thiamine diphosphate site. N177 serves as a coordination point for Mg(2+).

It belongs to the transketolase family. DXPS subfamily. In terms of assembly, homodimer. Mg(2+) is required as a cofactor. Thiamine diphosphate serves as cofactor.

The enzyme catalyses D-glyceraldehyde 3-phosphate + pyruvate + H(+) = 1-deoxy-D-xylulose 5-phosphate + CO2. It functions in the pathway metabolic intermediate biosynthesis; 1-deoxy-D-xylulose 5-phosphate biosynthesis; 1-deoxy-D-xylulose 5-phosphate from D-glyceraldehyde 3-phosphate and pyruvate: step 1/1. In terms of biological role, catalyzes the acyloin condensation reaction between C atoms 2 and 3 of pyruvate and glyceraldehyde 3-phosphate to yield 1-deoxy-D-xylulose-5-phosphate (DXP). The sequence is that of 1-deoxy-D-xylulose-5-phosphate synthase from Pelagibacter ubique (strain HTCC1062).